The chain runs to 626 residues: UvrABC system protein C (626 aa).

Residues 26–105 form the GIY-YIG domain; that stretch reads PEPGVYFMRD…IKQHQPHFNV (80 aa). The region spanning 215 to 250 is the UVR domain; the sequence is SELINTLSLQMEQAAEDLNFEQAARLRDQIKGLQGL.

It belongs to the UvrC family. In terms of assembly, interacts with UvrB in an incision complex.

The protein resides in the cytoplasm. Functionally, the UvrABC repair system catalyzes the recognition and processing of DNA lesions. UvrC both incises the 5' and 3' sides of the lesion. The N-terminal half is responsible for the 3' incision and the C-terminal half is responsible for the 5' incision. In Acaryochloris marina (strain MBIC 11017), this protein is UvrABC system protein C.